The primary structure comprises 231 residues: Phosphoribosylformylglycinamidine synthase subunit PurQ (231 aa).

Residues 3–231 enclose the Glutamine amidotransferase type-1 domain; it reads FGVLIFPGSN…ESMVGAMAKR (229 aa). The active-site Nucleophile is the cysteine 86. Catalysis depends on residues histidine 203 and glutamate 205.

Part of the FGAM synthase complex composed of 1 PurL, 1 PurQ and 2 PurS subunits.

Its subcellular location is the cytoplasm. The catalysed reaction is N(2)-formyl-N(1)-(5-phospho-beta-D-ribosyl)glycinamide + L-glutamine + ATP + H2O = 2-formamido-N(1)-(5-O-phospho-beta-D-ribosyl)acetamidine + L-glutamate + ADP + phosphate + H(+). The enzyme catalyses L-glutamine + H2O = L-glutamate + NH4(+). Its pathway is purine metabolism; IMP biosynthesis via de novo pathway; 5-amino-1-(5-phospho-D-ribosyl)imidazole from N(2)-formyl-N(1)-(5-phospho-D-ribosyl)glycinamide: step 1/2. Part of the phosphoribosylformylglycinamidine synthase complex involved in the purines biosynthetic pathway. Catalyzes the ATP-dependent conversion of formylglycinamide ribonucleotide (FGAR) and glutamine to yield formylglycinamidine ribonucleotide (FGAM) and glutamate. The FGAM synthase complex is composed of three subunits. PurQ produces an ammonia molecule by converting glutamine to glutamate. PurL transfers the ammonia molecule to FGAR to form FGAM in an ATP-dependent manner. PurS interacts with PurQ and PurL and is thought to assist in the transfer of the ammonia molecule from PurQ to PurL. This is Phosphoribosylformylglycinamidine synthase subunit PurQ from Koribacter versatilis (strain Ellin345).